Here is a 456-residue protein sequence, read N- to C-terminus: Bifunctional protein GlmU (456 aa).

Residues 1–229 are pyrophosphorylase; that stretch reads MTKKALSAVI…VMEVEGANNR (229 aa). UDP-N-acetyl-alpha-D-glucosamine-binding positions include 11–14, lysine 25, glutamine 76, 81–82, 103–105, glycine 140, glutamate 154, asparagine 169, and asparagine 227; these read LAAG, GT, and YGD. Residue aspartate 105 coordinates Mg(2+). Asparagine 227 is a Mg(2+) binding site. Residues 230–250 form a linker region; sequence LQLAALERYLQNKQASKLLLE. An N-acetyltransferase region spans residues 251–456; it reads GVMIYDPARF…QGWQRPIKKK (206 aa). UDP-N-acetyl-alpha-D-glucosamine contacts are provided by arginine 333 and lysine 351. Histidine 363 (proton acceptor) is an active-site residue. Residues tyrosine 366 and asparagine 377 each contribute to the UDP-N-acetyl-alpha-D-glucosamine site. Residues alanine 380, 386–387, serine 405, alanine 423, and arginine 440 each bind acetyl-CoA; that span reads NY.

This sequence in the N-terminal section; belongs to the N-acetylglucosamine-1-phosphate uridyltransferase family. In the C-terminal section; belongs to the transferase hexapeptide repeat family. In terms of assembly, homotrimer. It depends on Mg(2+) as a cofactor.

It localises to the cytoplasm. It carries out the reaction alpha-D-glucosamine 1-phosphate + acetyl-CoA = N-acetyl-alpha-D-glucosamine 1-phosphate + CoA + H(+). The catalysed reaction is N-acetyl-alpha-D-glucosamine 1-phosphate + UTP + H(+) = UDP-N-acetyl-alpha-D-glucosamine + diphosphate. It functions in the pathway nucleotide-sugar biosynthesis; UDP-N-acetyl-alpha-D-glucosamine biosynthesis; N-acetyl-alpha-D-glucosamine 1-phosphate from alpha-D-glucosamine 6-phosphate (route II): step 2/2. It participates in nucleotide-sugar biosynthesis; UDP-N-acetyl-alpha-D-glucosamine biosynthesis; UDP-N-acetyl-alpha-D-glucosamine from N-acetyl-alpha-D-glucosamine 1-phosphate: step 1/1. The protein operates within bacterial outer membrane biogenesis; LPS lipid A biosynthesis. Its function is as follows. Catalyzes the last two sequential reactions in the de novo biosynthetic pathway for UDP-N-acetylglucosamine (UDP-GlcNAc). The C-terminal domain catalyzes the transfer of acetyl group from acetyl coenzyme A to glucosamine-1-phosphate (GlcN-1-P) to produce N-acetylglucosamine-1-phosphate (GlcNAc-1-P), which is converted into UDP-GlcNAc by the transfer of uridine 5-monophosphate (from uridine 5-triphosphate), a reaction catalyzed by the N-terminal domain. This is Bifunctional protein GlmU from Haemophilus influenzae (strain PittEE).